Consider the following 164-residue polypeptide: Zinc finger A20 and AN1 domain-containing stress-associated protein 1 (164 aa).

The A20-type zinc-finger motif lies at 16 to 50; it reads APEITLCANSCGFPGNPATQNLCQNCFLAATASTS. 4 residues coordinate Zn(2+): cysteine 22, cysteine 26, cysteine 38, and cysteine 41. Residues 48 to 58 are compositionally biased toward low complexity; that stretch reads STSSPSSLSSP. Residues 48-81 are disordered; the sequence is STSSPSSLSSPVLDKQPPRPAAPLVEPQAPLPPP. Residues 99 to 145 form an AN1-type zinc finger; sequence TSAVNRCSRCRKRVGLTGFRCRCGHLFCGEHRYSDRHGCSYDYKSAA. Zn(2+) is bound by residues cysteine 105, cysteine 108, cysteine 119, cysteine 121, cysteine 126, histidine 129, histidine 135, and cysteine 137.

May be involved in environmental stress response. This is Zinc finger A20 and AN1 domain-containing stress-associated protein 1 (SAP1) from Oryza sativa subsp. indica (Rice).